Consider the following 92-residue polypeptide: Small ribosomal subunit protein uS19 (92 aa).

This sequence belongs to the universal ribosomal protein uS19 family.

Its function is as follows. Protein S19 forms a complex with S13 that binds strongly to the 16S ribosomal RNA. The protein is Small ribosomal subunit protein uS19 (rpsS) of Geobacillus stearothermophilus (Bacillus stearothermophilus).